The chain runs to 396 residues: Cytochrome c biogenesis protein Ccs1 (396 aa).

3 helical membrane-spanning segments follow: residues 22–42, 79–99, and 162–182; these read LKFS…GTII, SNFY…CSLK, and AGPL…AIHA.

It belongs to the Ccs1/CcsB family. In terms of assembly, may interact with CcsA.

Its subcellular location is the plastid. It localises to the chloroplast thylakoid membrane. Its function is as follows. Required during biogenesis of c-type cytochromes (cytochrome c6 and cytochrome f) at the step of heme attachment. The sequence is that of Cytochrome c biogenesis protein Ccs1 from Cyanidium caldarium (Red alga).